Reading from the N-terminus, the 388-residue chain is Chorismate synthase (388 aa).

The NADP(+) site is built by Arg-39 and Arg-45. Residues 132–134, 251–252, Gly-296, 311–315, and Arg-337 contribute to the FMN site; these read RSS, NA, and KPIPT.

It belongs to the chorismate synthase family. In terms of assembly, homotetramer. It depends on FMNH2 as a cofactor.

It catalyses the reaction 5-O-(1-carboxyvinyl)-3-phosphoshikimate = chorismate + phosphate. Its pathway is metabolic intermediate biosynthesis; chorismate biosynthesis; chorismate from D-erythrose 4-phosphate and phosphoenolpyruvate: step 7/7. In terms of biological role, catalyzes the anti-1,4-elimination of the C-3 phosphate and the C-6 proR hydrogen from 5-enolpyruvylshikimate-3-phosphate (EPSP) to yield chorismate, which is the branch point compound that serves as the starting substrate for the three terminal pathways of aromatic amino acid biosynthesis. This reaction introduces a second double bond into the aromatic ring system. The chain is Chorismate synthase from Staphylococcus aureus (strain MRSA252).